The primary structure comprises 438 residues: MTAAPDARTTAVMSAPLAEVDPDIAELLAKELGRQRDTLEMIASENFAPRAVLQAQGSVLTNKYAEGLPGRRYYGGCEHVDVVENLARDRAKALFGAEFANVQPHSGAQANAAVLHALMSPGERLLGLDLANGGHLTHGMRLNFSGKLYENGFYGVDPATHLIDMDAVRATALEFRPKVIIAGWSAYPRVLDFAAFRSIADEVGAKLLVDMAHFAGLVAAGLHPSPVPHADVVSTTVHKTLGGGRSGLIVGKQQYAKAINSAVFPGQQGGPLMHVIAGKAVALKIAATPEFADRQRRTLSGARIIADRLMAPDVAKAGVSVVSGGTDVHLVLVDLRDSPLDGQAAEDLLHEVGITVNRNAVPNDPRPPMVTSGLRIGTPALATRGFGDTEFTEVADIIATALATGSSVDVSALKDRATRLARAFPLYDGLEEWSLVGR.

(6S)-5,6,7,8-tetrahydrofolate-binding positions include leucine 130 and 134-136 (GHL). The residue at position 239 (lysine 239) is an N6-(pyridoxal phosphate)lysine.

The protein belongs to the SHMT family. Homodimer. The cofactor is pyridoxal 5'-phosphate.

The protein localises to the cytoplasm. The catalysed reaction is (6R)-5,10-methylene-5,6,7,8-tetrahydrofolate + glycine + H2O = (6S)-5,6,7,8-tetrahydrofolate + L-serine. Its pathway is one-carbon metabolism; tetrahydrofolate interconversion. The protein operates within amino-acid biosynthesis; glycine biosynthesis; glycine from L-serine: step 1/1. Its function is as follows. Catalyzes the reversible interconversion of serine and glycine with tetrahydrofolate (THF) serving as the one-carbon carrier. This reaction serves as the major source of one-carbon groups required for the biosynthesis of purines, thymidylate, methionine, and other important biomolecules. Also exhibits THF-independent aldolase activity toward beta-hydroxyamino acids, producing glycine and aldehydes, via a retro-aldol mechanism. The chain is Serine hydroxymethyltransferase 1 from Mycobacterium tuberculosis (strain CDC 1551 / Oshkosh).